Consider the following 210-residue polypeptide: Probable GTP-binding protein EngB (210 aa).

Residues 25-199 (TGIEVAFAGR…RQKLDTWFSE (175 aa)) enclose the EngB-type G domain. Residues 33 to 40 (GRSNAGKS), 60 to 64 (GRTQL), 78 to 81 (DLPG), 145 to 148 (TKAD), and 178 to 180 (FSS) each bind GTP. Mg(2+) contacts are provided by Ser-40 and Thr-62.

It belongs to the TRAFAC class TrmE-Era-EngA-EngB-Septin-like GTPase superfamily. EngB GTPase family. Mg(2+) is required as a cofactor.

Necessary for normal cell division and for the maintenance of normal septation. The sequence is that of Probable GTP-binding protein EngB from Escherichia coli O6:H1 (strain CFT073 / ATCC 700928 / UPEC).